Reading from the N-terminus, the 1323-residue chain is uncharacterized protein (1323 aa).

Positions 1 to 11 are enriched in basic and acidic residues; the sequence is MRELQGDDSSR. Disordered stretches follow at residues 1–57 and 79–112; these read MREL…SSYY and IHES…HSET. Low complexity predominate over residues 12–21; the sequence is KSPPSDSVVK. The residue at position 24 (Ser24) is a Phosphoserine. The span at 27 to 40 shows a compositional bias: basic and acidic residues; sequence DYEHSLKSLQDERT. Polar residues-rich tracts occupy residues 42-57 and 80-105; these read NYPN…SSYY and HESS…SSTI. WD repeat units lie at residues 271-314, 320-360, 364-403, 409-449, 453-494, and 502-551; these read RHST…DRAI, GHTR…FPVN, DWHN…APLH, ENIT…EEPE, TTDS…KEGP, and GHTD…LNSM. The region spanning 671-779 is the RWD domain; that stretch reads EELSWIGQKY…SYLSGNLSVD (109 aa). A compositionally biased stretch (polar residues) spans 879–888; the sequence is SNSVADSDST. The disordered stretch occupies residues 879–904; it reads SNSVADSDSTNYDDENSLNRGGTSES. Residues 1265-1309 form an RING-type; degenerate zinc finger; that stretch reads CTFCCLSIHGLCIVCGLCLHVMHEDCYKEWFSNGDSISQSCSSGC.

The protein belongs to the WD repeat WDR59 family.

May be involved in telomere capping. This is an uncharacterized protein from Schizosaccharomyces pombe (strain 972 / ATCC 24843) (Fission yeast).